Consider the following 159-residue polypeptide: Phosphopantetheine adenylyltransferase (159 aa).

A substrate-binding site is contributed by threonine 10. ATP is bound by residues 10 to 11 and histidine 18; that span reads TF. Substrate is bound by residues lysine 42, methionine 74, and arginine 88. ATP is bound by residues 89–91, glutamate 99, and 124–130; these read GLR and WSFISSS.

Belongs to the bacterial CoaD family. In terms of assembly, homohexamer. Mg(2+) is required as a cofactor.

It localises to the cytoplasm. It catalyses the reaction (R)-4'-phosphopantetheine + ATP + H(+) = 3'-dephospho-CoA + diphosphate. It participates in cofactor biosynthesis; coenzyme A biosynthesis; CoA from (R)-pantothenate: step 4/5. Reversibly transfers an adenylyl group from ATP to 4'-phosphopantetheine, yielding dephospho-CoA (dPCoA) and pyrophosphate. The chain is Phosphopantetheine adenylyltransferase from Salmonella typhimurium (strain LT2 / SGSC1412 / ATCC 700720).